A 317-amino-acid chain; its full sequence is Glucokinase (317 aa).

6–12 contributes to the ATP binding site; the sequence is GVDIGGT.

It belongs to the ROK (NagC/XylR) family. As to quaternary structure, homooligomer (possibly a homotetramer). Alternatively, it may form a heterotetramer of two glucokinase subunits with two ORF2 (AC P40182) proteins.

It localises to the cytoplasm. The catalysed reaction is D-glucose + ATP = D-glucose 6-phosphate + ADP + H(+). Functionally, a probable glucose kinase. Required for glucose repression of many different genes, restores glucose kinase activity in E.coli glk mutants. The sequence is that of Glucokinase (glkA) from Streptomyces coelicolor (strain ATCC BAA-471 / A3(2) / M145).